The chain runs to 317 residues: Beta-ketoacyl-[acyl-carrier-protein] synthase III (317 aa).

Active-site residues include cysteine 112 and histidine 244. Positions 245-249 (QANLR) are ACP-binding. The active site involves asparagine 274.

The protein belongs to the thiolase-like superfamily. FabH family. Homodimer.

The protein resides in the cytoplasm. It catalyses the reaction malonyl-[ACP] + acetyl-CoA + H(+) = 3-oxobutanoyl-[ACP] + CO2 + CoA. It functions in the pathway lipid metabolism; fatty acid biosynthesis. Its function is as follows. Catalyzes the condensation reaction of fatty acid synthesis by the addition to an acyl acceptor of two carbons from malonyl-ACP. Catalyzes the first condensation reaction which initiates fatty acid synthesis and may therefore play a role in governing the total rate of fatty acid production. Possesses both acetoacetyl-ACP synthase and acetyl transacylase activities. Its substrate specificity determines the biosynthesis of branched-chain and/or straight-chain of fatty acids. The polypeptide is Beta-ketoacyl-[acyl-carrier-protein] synthase III (Shigella sonnei (strain Ss046)).